Here is a 297-residue protein sequence, read N- to C-terminus: Putative S-adenosyl-L-methionine-dependent methyltransferase Mmcs_1044 (297 aa).

S-adenosyl-L-methionine-binding positions include aspartate 124 and 153–154 (DL).

The protein belongs to the UPF0677 family.

Exhibits S-adenosyl-L-methionine-dependent methyltransferase activity. This chain is Putative S-adenosyl-L-methionine-dependent methyltransferase Mmcs_1044, found in Mycobacterium sp. (strain MCS).